A 440-amino-acid polypeptide reads, in one-letter code: Gamma-aminobutyric acid receptor subunit pi (440 aa).

Positions 1–23 (MSYSLYLAFVCLNLLAQRMCIQG) are cleaved as a signal peptide. Over 24-241 (NQFNVEVSRS…LVLQFELRRN (218 aa)) the chain is Extracellular. N-linked (GlcNAc...) asparagine glycans are attached at residues Asn-43, Asn-102, and Asn-145. The cysteines at positions 160 and 174 are disulfide-linked. N-linked (GlcNAc...) asparagine glycosylation is found at Asn-196 and Asn-228. The helical transmembrane segment at 242–262 (VLYFILETYVPSTFLVVLSWV) threads the bilayer. The Cytoplasmic portion of the chain corresponds to 263 to 270 (SFWISLES). A helical membrane pass occupies residues 271-290 (VPARTCIGVTTVLSMTTLMI). Residues 291–301 (GSRTSLPNTNC) are Extracellular-facing. A helical membrane pass occupies residues 302–322 (FIKAIDVYLGICFSFVFGALL). The Cytoplasmic segment spans residues 323–419 (EYAVAHYSSL…NPSNVDRYSK (97 aa)). Residues 420-440 (LLFPLIFMLANVFYWAYYMYF) traverse the membrane as a helical segment.

This sequence belongs to the ligand-gated ion channel (TC 1.A.9) family. Gamma-aminobutyric acid receptor (TC 1.A.9.5) subfamily. GABRP sub-subfamily. In terms of assembly, heteropentamer, formed by a combination of alpha (GABRA1-6), beta (GABRB1-3), gamma (GABRG1-3), delta (GABRD), epsilon (GABRE), rho (GABRR1-3), pi (GABRP) and theta (GABRQ) chains, each subunit exhibiting distinct physiological and pharmacological properties. In terms of tissue distribution, expressed in lungs, in alveolar epithelium.

It localises to the cell membrane. Its subcellular location is the apical cell membrane. The catalysed reaction is chloride(in) = chloride(out). Pi subunit of the heteropentameric ligand-gated chloride channel gated by gamma-aminobutyric acid (GABA). GABA-gated chloride channels, also named GABA(A) receptors (GABAAR), consist of five subunits arranged around a central pore and contain GABA active binding site(s) located at the alpha and beta subunit interfaces. When activated by GABA, GABAARs selectively allow the flow of chloride anions across the cell membrane down their electrochemical gradient. Pi-containing GABAARs are mostly located in peripheral tissues. In the uterus, pi subunits modulate uterus contraction by altering the sensitivity of GABAARs to pregnanolone. In the lungs, pi-containing GABAARs contribute to pulmonary fluid transport via luminal secretion of chloride. This Rattus norvegicus (Rat) protein is Gamma-aminobutyric acid receptor subunit pi.